The sequence spans 304 residues: Nucleotide-binding protein RHA1_ro07174 (304 aa).

An ATP-binding site is contributed by 24–31; that stretch reads GLSGAGLQ. 75-78 is a GTP binding site; it reads DVRS.

It belongs to the RapZ-like family.

Functionally, displays ATPase and GTPase activities. This Rhodococcus jostii (strain RHA1) protein is Nucleotide-binding protein RHA1_ro07174.